The primary structure comprises 338 residues: Methionine synthase (338 aa).

Zn(2+) is bound by residues His-211, Cys-213, and Cys-294.

Belongs to the archaeal MetE family. Zn(2+) serves as cofactor.

It participates in amino-acid biosynthesis; L-methionine biosynthesis via de novo pathway. Functionally, catalyzes the transfer of a methyl group to L-homocysteine resulting in methionine formation. The physiological methyl donor is unknown. The protein is Methionine synthase of Sulfurisphaera tokodaii (strain DSM 16993 / JCM 10545 / NBRC 100140 / 7) (Sulfolobus tokodaii).